The chain runs to 249 residues: Probable transcriptional regulatory protein LBL_2537 (249 aa).

It belongs to the TACO1 family.

It is found in the cytoplasm. The polypeptide is Probable transcriptional regulatory protein LBL_2537 (Leptospira borgpetersenii serovar Hardjo-bovis (strain L550)).